The following is a 106-amino-acid chain: Nucleoid-associated protein Nwi_0368 (106 aa).

This sequence belongs to the YbaB/EbfC family. Homodimer.

It is found in the cytoplasm. The protein resides in the nucleoid. Functionally, binds to DNA and alters its conformation. May be involved in regulation of gene expression, nucleoid organization and DNA protection. In Nitrobacter winogradskyi (strain ATCC 25391 / DSM 10237 / CIP 104748 / NCIMB 11846 / Nb-255), this protein is Nucleoid-associated protein Nwi_0368.